The chain runs to 268 residues: Phosphatidylcholine synthase (268 aa).

The Cytoplasmic segment spans residues 1–27 (MAARKAAKKLTDRIPRPKKKVTWPQAR). A helical transmembrane segment spans residues 28–48 (AFSVHLLTASGSFLAFLSLVA). Residues 49 to 53 (ASEER) lie on the Periplasmic side of the membrane. The chain crosses the membrane as a helical span at residues 54 to 74 (WTAMFWWLGLALFVDGIDGPI). Residues 75-88 (ARKLEVKEILPTWS) are Cytoplasmic-facing. A helical transmembrane segment spans residues 89-109 (GELLDNIIDYVTYVLIPAFAL). The Periplasmic portion of the chain corresponds to 110–112 (YQR). The chain crosses the membrane as a helical span at residues 113 to 133 (GFMGEGLSFLSAAIIVVSSAI). The Cytoplasmic portion of the chain corresponds to 134-145 (YYADTGMKTKEN). The chain crosses the membrane as a helical span at residues 146–166 (FFKGFPVVWNMVVFTLFVIEP). Residues 167–168 (GQ) lie on the Periplasmic side of the membrane. A helical transmembrane segment spans residues 169–189 (WVSFAVVVVAGILTFVPINFI). Residues 190–203 (HPVRVVRLRPFNLT) lie on the Cytoplasmic side of the membrane. Residues 204 to 224 (MTLLWCAFGALALAQAALAAF) traverse the membrane as a helical segment. At 225-240 (YDQIGVLGAQVSTFIK) the chain is on the periplasmic side. Residues 241-261 (IGITITGLYLACIGGIMQFFP) traverse the membrane as a helical segment. Residues 262–268 (NLGAKKA) are Cytoplasmic-facing.

It belongs to the CDP-alcohol phosphatidyltransferase class-I family. It depends on Mn(2+) as a cofactor.

It localises to the cell inner membrane. It carries out the reaction a CDP-1,2-diacyl-sn-glycerol + choline = a 1,2-diacyl-sn-glycero-3-phosphocholine + CMP + H(+). Its function is as follows. Condenses choline with CDP-diglyceride to produce phosphatidylcholine and CMP. In Mesorhizobium japonicum (strain LMG 29417 / CECT 9101 / MAFF 303099) (Mesorhizobium loti (strain MAFF 303099)), this protein is Phosphatidylcholine synthase (pcs).